A 122-amino-acid polypeptide reads, in one-letter code: Large ribosomal subunit protein uL14c (122 aa).

The protein belongs to the universal ribosomal protein uL14 family. Part of the 50S ribosomal subunit.

The protein localises to the plastid. It is found in the chloroplast. Binds to 23S rRNA. This Ipomoea purpurea (Common morning glory) protein is Large ribosomal subunit protein uL14c.